The chain runs to 547 residues: MSAKEVKFGVDARDRMLRGVDILANAVKVTLGPKGRNVVLDKSFGAPRITKDGVTVAKEIELEDKFENMGAQMVREVASKSADLAGDGTTTATVLAAAIVREGAKSVAAGMNPMDLKRGIDLAVEAVVADLVKNSKKVTSNEEIAQVGTISANGDAEIGKFLSDAMKKVGNEGVITVEEAKSLETELDVVEGMQFDRGYISPYFVTNADKMRVEFDDAYILINEKKLSNLNELLPLLEAVVQTGKPLVIVAEDVEGEALATLVVNRLRGGLKVAAVKAPGFGDRRKAMLQDIAILTGGQAISEDLGIKMENVTLAMLGKAKKVMIDKENTTIVNGAGKKADIEARVAQIKAQIEETTSDYDREKLQERLAKLAGGVAVIRVGGATEIEVKERKDRVDDAMHATRAAVEEGILPGGGVALLRASEQLKRIKTQNDDQKTGVEIVRKALSWPARQIAINAGEDGSVIVGKILEKDQYSYGFDSQSGEYGDMVKKGIIDPTKVVRAAIQNAASVAALLITTEAMIAELPKKGNAGGGMPPGGGGMGGMDF.

ATP-binding positions include 30–33 (TLGP), K51, 87–91 (DGTTT), G415, and D496.

Belongs to the chaperonin (HSP60) family. Forms a cylinder of 14 subunits composed of two heptameric rings stacked back-to-back. Interacts with the co-chaperonin GroES.

The protein localises to the cytoplasm. The catalysed reaction is ATP + H2O + a folded polypeptide = ADP + phosphate + an unfolded polypeptide.. Its function is as follows. Together with its co-chaperonin GroES, plays an essential role in assisting protein folding. The GroEL-GroES system forms a nano-cage that allows encapsulation of the non-native substrate proteins and provides a physical environment optimized to promote and accelerate protein folding. The protein is Chaperonin GroEL 1 of Rhodopseudomonas palustris (strain BisB18).